A 776-amino-acid polypeptide reads, in one-letter code: V-set and immunoglobulin domain-containing protein 10-like 2 (776 aa).

The N-terminal stretch at methionine 1 to glycine 28 is a signal peptide. 5 Ig-like domains span residues proline 32–methionine 140, proline 150–aspartate 234, proline 242–glutamine 324, proline 399–glutamate 498, and proline 500–glutamate 592. 5 cysteine pairs are disulfide-bonded: cysteine 56-cysteine 122, cysteine 169-cysteine 217, cysteine 268-cysteine 308, cysteine 435-cysteine 480, and cysteine 521-cysteine 576. The region spanning threonine 608–phenylalanine 708 is the Fibronectin type-III domain. N-linked (GlcNAc...) asparagine glycans are attached at residues asparagine 611 and asparagine 637. The helical transmembrane segment at alanine 713 to phenylalanine 733 threads the bilayer.

It localises to the membrane. This chain is V-set and immunoglobulin domain-containing protein 10-like 2, found in Mus musculus (Mouse).